The chain runs to 337 residues: Follistatin (337 aa).

A signal peptide spans 1-22 (PGGVCLLLLLLCQFMEDRSAQA). In terms of domain architecture, TB spans 23–96 (GNCWLRQAKN…TCENVDCGPG (74 aa)). Disulfide bonds link Cys25/Cys48, Cys35/Cys81, Cys49/Cys84, Cys88/Cys99, Cys93/Cys109, Cys111/Cys143, Cys115/Cys136, Cys125/Cys157, Cys161/Cys172, Cys166/Cys182, Cys185/Cys218, Cys189/Cys211, Cys200/Cys232, Cys238/Cys249, Cys243/Cys260, Cys263/Cys295, Cys267/Cys288, and Cys277/Cys309. The region spanning 87 to 110 (TCENVDCGPGKKCRMNKKNKPRCV) is the Follistatin-like 1 domain. A Kazal-like 1 domain is found at 105–159 (NKPRCVCAPDCSNITWKGPVCGLDGKTYRNECALLKARCKEQPELEVQYQGKCKK). N-linked (GlcNAc...) asparagine glycosylation is present at Asn117. The 24-residue stretch at 160–183 (TCRDVFCPGSSTCVVDQTNNAYCV) folds into the Follistatin-like 2 domain. Positions 179-234 (NAYCVTCNRICPEPTSSEQYLCGNDGVTYPSACHLRKATCLLGRSIGLAYEGKCIK) constitute a Kazal-like 2 domain. The Follistatin-like 3 domain occupies 237-261 (SCEDIQCTGGKKCLWDFKVGRGRCS). Residues 254–311 (KVGRGRCSLCGELCPESKSEEPVCASDNATYASECAMKEAACSSGVLLEVKHSGSCNS) enclose the Kazal-like 3 domain. N-linked (GlcNAc...) asparagine glycosylation occurs at Asn281. Residues 309-337 (CNSISEDTEDEEEDEDQDYSFPISSILEW) form a disordered region. A compositionally biased stretch (acidic residues) spans 314 to 326 (EDTEDEEEDEDQD).

In terms of assembly, monomer.

The protein localises to the secreted. Its function is as follows. Binds directly to activin and functions as an activin antagonist. Specific inhibitor of the biosynthesis and secretion of pituitary follicle stimulating hormone (FSH). The sequence is that of Follistatin from Ovis aries (Sheep).